The chain runs to 305 residues: UPF0282 protein Pisl_0021 (305 aa).

Belongs to the UPF0282 family.

This Pyrobaculum islandicum (strain DSM 4184 / JCM 9189 / GEO3) protein is UPF0282 protein Pisl_0021.